The primary structure comprises 263 residues: Inactive adenylate kinase (263 aa).

The protein belongs to the adenylate kinase family.

It is found in the cytoplasm. Its function is as follows. Lacks adenylate kinase activity. The polypeptide is Inactive adenylate kinase (Plasmodium falciparum (isolate 3D7)).